The following is a 262-amino-acid chain: uncharacterized protein (262 aa).

One can recognise an ABC transporter domain in the interval Ile-5–Gly-223. Gly-37 to Thr-44 serves as a coordination point for ATP.

Belongs to the ABC transporter superfamily.

This is an uncharacterized protein from Methanocaldococcus jannaschii (strain ATCC 43067 / DSM 2661 / JAL-1 / JCM 10045 / NBRC 100440) (Methanococcus jannaschii).